A 928-amino-acid chain; its full sequence is TBC1 domain family member 2A (928 aa).

Position 1 is an N-acetylmethionine (M1). Positions 1–19 are enriched in low complexity; that stretch reads MEGAGENAPESSSSAPGSE. Residues 1–39 form a disordered region; the sequence is MEGAGENAPESSSSAPGSEESARDPQVPPPEEESGDCAR. The interval 1-169 is interaction with CADH1; it reads MEGAGENAPE…AGNGPVLHLE (169 aa). The 98-residue stretch at 45 to 142 folds into the PH domain; sequence PKKLCGYLSK…WLQQLQMKRW (98 aa). Residues 225-275 are disordered; the sequence is NKQAQGTGHEPPGEDSPQSGEPQREEQPLASDASTPGREPEDSPKPAPKPS. Positions 295 to 433 are interaction with RAC1; sequence SEGITRNRTA…KVTQDFTHPP (139 aa). A coiled-coil region spans residues 298-416; the sequence is ITRNRTAQEK…LMDKNHAKQQ (119 aa). Phosphoserine is present on S436. A Rab-GAP TBC domain is found at 625-817; sequence GVPREHRPRV…RVWDAFLYEG (193 aa). Positions 875-913 form a coiled coil; sequence MKQLRQLRMVHRERLEAELRELEQLKAEYLERRASRRRA. 2 positions are modified to phosphoserine: S915 and S920.

Interacts with activated RAC1 and CDH1. Expressed in a broad range of tissues, especially in kidney, liver, lung and placenta. Also expressed in keratinocytes and epithelia-containing organs. Isoform 2 is differentially expressed in prostate normal and cancer cells (at protein level).

It localises to the cytoplasm. The protein resides in the cytoplasmic vesicle. The protein localises to the cell junction. In terms of biological role, acts as a GTPase-activating protein for RAB7A. Signal effector acting as a linker between RAC1 and RAB7A, leading to RAB7A inactivation and subsequent inhibition of cadherin degradation and reduced cell-cell adhesion. This Homo sapiens (Human) protein is TBC1 domain family member 2A (TBC1D2).